A 759-amino-acid polypeptide reads, in one-letter code: Secretin XpsD (759 aa).

The first 21 residues, 1-21 (MSERMTPRLFPVSLLIGLLAG), serve as a signal peptide directing secretion. Cysteine 22 carries the N-palmitoyl cysteine lipid modification. Cysteine 22 carries the S-diacylglycerol cysteine lipid modification. Low complexity predominate over residues 40 to 51 (VGAAGATQTTAE). A disordered region spans residues 40-69 (VGAAGATQTTAEQRADGNASAKPTPVIRRG). Residues 92 to 187 (GSATFNFEGE…APSTASPSAA (96 aa)) are N0. The interval 189–253 (GFEVRVVPLK…VQIFDVDWLS (65 aa)) is N1. The N2 stretch occupies residues 254–323 (GMSVGVFPIQ…IQQWLDRIDS (70 aa)). An N3 region spans residues 326-474 (GGVRLFSYEL…SIRDVIEKLD (149 aa)). The disordered stretch occupies residues 352–434 (GGRGNGGNSG…PPSTNQNGSV (83 aa)). The segment covering 392 to 401 (ATGGDIGGTS) has biased composition (gly residues). The span at 425–434 (PPSTNQNGSV) shows a compositional bias: polar residues. The segment at 479 to 734 (QVHIEAQIAE…VLITPSIVRN (256 aa)) is secretin. Residues 736–759 (QDARDLTDEYGSKFKSMRPMDVHK) form a s domain region.

This sequence belongs to the bacterial secretin family. GSP D subfamily. As to quaternary structure, forms a cylindrical channel with 15 subunits. Binds to XpsN.

It is found in the cell outer membrane. In terms of biological role, involved in a type II secretion system (T2SS, formerly general secretion pathway, GSP) for the export of proteins. This subunit forms the outer membrane channel. The sequence is that of Secretin XpsD (xpsD) from Xanthomonas campestris pv. campestris (strain ATCC 33913 / DSM 3586 / NCPPB 528 / LMG 568 / P 25).